A 42-amino-acid chain; its full sequence is MKVIGSLKSAKIRDKDCRVVRRKGRIYVINKKNPRFKARQGY.

The protein belongs to the bacterial ribosomal protein bL36 family.

The chain is Large ribosomal subunit protein bL36 from Ehrlichia ruminantium (strain Gardel).